The sequence spans 238 residues: DNA repair protein RecO (238 aa).

It belongs to the RecO family.

Involved in DNA repair and RecF pathway recombination. The protein is DNA repair protein RecO of Hahella chejuensis (strain KCTC 2396).